Consider the following 484-residue polypeptide: Threonine synthase-like 2 (484 aa).

The residue at position 113 (Lys-113) is an N6-(pyridoxal phosphate)lysine.

The protein belongs to the threonine synthase family. It depends on pyridoxal 5'-phosphate as a cofactor.

It is found in the secreted. Acts as a catabolic phospho-lyase on both gamma- and beta-phosphorylated substrates. Degrades O-phospho-threonine (PThr) to alpha-ketobutyrate, ammonia and phosphate. Functionally, potent inducer of osteoblastic production of IL6. May act to exacerbate inflammation and/or bone turnover under inflammatory conditions. This Homo sapiens (Human) protein is Threonine synthase-like 2 (THNSL2).